The following is a 487-amino-acid chain: 4-alpha-glucanotransferase (487 aa).

The protein belongs to the disproportionating enzyme family.

It localises to the cytoplasm. The catalysed reaction is Transfers a segment of a (1-&gt;4)-alpha-D-glucan to a new position in an acceptor, which may be glucose or a (1-&gt;4)-alpha-D-glucan.. In terms of biological role, catalyzes a disproportionation reaction in which single or multiple glucose units from oligosaccharides are transferred to the 4-hydroxyl group of acceptor sugars. Glucose, maltose and maltotriose can act as acceptor, whereas of the three only maltotriose can act as donor. The sequence is that of 4-alpha-glucanotransferase (malQ) from Clostridium butyricum.